Consider the following 315-residue polypeptide: Cytochrome bo(3) ubiquinol oxidase subunit 2 (315 aa).

Positions 1–24 (MRLRKYNKSLGWLSLFAGTVLLSG) are cleaved as a signal peptide. Cys-25 is lipidated: N-palmitoyl cysteine. A lipid anchor (S-diacylglycerol cysteine) is attached at Cys-25. The Periplasmic portion of the chain corresponds to 25–50 (CNSALLDPKGQIGLEQRSLILTAFGL). The helical transmembrane segment at 51 to 68 (MLIVVIPAILMAVGFAWK) threads the bilayer. The Cytoplasmic portion of the chain corresponds to 69-92 (YRASNKDAKYSPNWSHSNKVEAVV). Residues 93-111 (WTVPILIIIFLAVLTWKTT) traverse the membrane as a helical segment. Over 112 to 315 (HALEPSKPLA…MDMSHAESAH (204 aa)) the chain is Periplasmic. Positions 288-315 (MDMTQPEGEHSAHEGMEGMDMSHAESAH) are disordered. The segment covering 294–315 (EGEHSAHEGMEGMDMSHAESAH) has biased composition (basic and acidic residues).

The protein belongs to the cytochrome c oxidase subunit 2 family. In terms of assembly, heterooctamer of two A chains, two B chains, two C chains and two D chains.

It localises to the cell inner membrane. Its function is as follows. Cytochrome bo(3) ubiquinol terminal oxidase is the component of the aerobic respiratory chain of E.coli that predominates when cells are grown at high aeration. Has proton pump activity across the membrane in addition to electron transfer, pumping 2 protons/electron. The sequence is that of Cytochrome bo(3) ubiquinol oxidase subunit 2 (cyoA) from Escherichia coli O6:H1 (strain CFT073 / ATCC 700928 / UPEC).